Here is a 244-residue protein sequence, read N- to C-terminus: RAD51-like protein 1 (244 aa).

As to quaternary structure, interacts with brc-2 and rad-51.

The protein localises to the nucleus. Has a role in the homologous recombination repair (HRR) of genomic DNA during meiosis. Required for rad-51 recruitment onto ssDNA gaps generated at stalled replication fork barriers. In Caenorhabditis briggsae, this protein is RAD51-like protein 1.